The sequence spans 60 residues: RDAYPADWRGCKPSCPWGSSSWCNEECTSLGGSSGYCAWPACWCYGLPDSVRYYNNKCHK.

One can recognise an LCN-type CS-alpha/beta domain in the interval 1 to 59 (RDAYPADWRGCKPSCPWGSSSWCNEECTSLGGSSGYCAWPACWCYGLPDSVRYYNNKCH). Cystine bridges form between Cys-11–Cys-58, Cys-15–Cys-37, Cys-23–Cys-42, and Cys-27–Cys-44.

It belongs to the long (4 C-C) scorpion toxin superfamily. Sodium channel inhibitor family. Beta subfamily. Expressed by the venom gland.

It localises to the secreted. Its function is as follows. Inhibits the sodium currents (Nav) in an apparent irreversible manner. Produces small depolarization and induces repetitive firing in squid axons. Is specific for arthropods (crickets, triatomides, crabs and squids), but is non-toxic to mice. This chain is Toxin TdNa2, found in Tityus discrepans (Venezuelan scorpion).